The primary structure comprises 162 residues: Transcription elongation factor GreB (162 aa).

Residues 52–73 (KKLLREIDRRVRYLRKRLEDVK) adopt a coiled-coil conformation.

Belongs to the GreA/GreB family. GreB subfamily.

Functionally, necessary for efficient RNA polymerase transcription elongation past template-encoded arresting sites. The arresting sites in DNA have the property of trapping a certain fraction of elongating RNA polymerases that pass through, resulting in locked ternary complexes. Cleavage of the nascent transcript by cleavage factors such as GreA or GreB allows the resumption of elongation from the new 3'terminus. GreB releases sequences of up to 9 nucleotides in length. The protein is Transcription elongation factor GreB of Pseudomonas putida (strain ATCC 47054 / DSM 6125 / CFBP 8728 / NCIMB 11950 / KT2440).